The sequence spans 241 residues: Ion-translocating oxidoreductase complex subunit E (241 aa).

The next 6 membrane-spanning stretches (helical) occupy residues 22–42, 69–89, 91–111, 124–144, 157–177, and 182–202; these read LLGLCPVLAITVNAINAIGLG, IPIYIIIISSVVSSIDLVIKA, AFNLYQSLGIFIPLIITNCIV, VLVSILDGLSIGLGSTLTMFL, LFFGIEHVLGESFRFLYIEVL, and VFLLFAFPSGAFMILGIVLAG.

Belongs to the NqrDE/RnfAE family. As to quaternary structure, the complex is composed of six subunits: RnfA, RnfB, RnfC, RnfD, RnfE and RnfG.

It is found in the cell inner membrane. Its function is as follows. Part of a membrane-bound complex that couples electron transfer with translocation of ions across the membrane. The sequence is that of Ion-translocating oxidoreductase complex subunit E from Buchnera aphidicola subsp. Baizongia pistaciae (strain Bp).